The sequence spans 307 residues: Porphobilinogen deaminase (307 aa).

Cys-239 bears the S-(dipyrrolylmethanemethyl)cysteine mark.

The protein belongs to the HMBS family. As to quaternary structure, monomer. Dipyrromethane serves as cofactor.

It catalyses the reaction 4 porphobilinogen + H2O = hydroxymethylbilane + 4 NH4(+). It functions in the pathway porphyrin-containing compound metabolism; protoporphyrin-IX biosynthesis; coproporphyrinogen-III from 5-aminolevulinate: step 2/4. Its function is as follows. Tetrapolymerization of the monopyrrole PBG into the hydroxymethylbilane pre-uroporphyrinogen in several discrete steps. This is Porphobilinogen deaminase from Campylobacter jejuni subsp. jejuni serotype O:23/36 (strain 81-176).